The following is a 393-amino-acid chain: Upstream-binding factor 1-like protein 1 (393 aa).

2 consecutive DNA-binding regions (HMG box) follow at residues 100-168 (PKRP…ARFR) and 222-288 (QKPP…DLWL). Residues 308–393 (KNMAMTGGPD…SSGEEIEVDV (86 aa)) are disordered. Residues 365–377 (EENRKKDREKEES) show a composition bias toward basic and acidic residues.

Its subcellular location is the cytoplasm. It localises to the nucleus. Its function is as follows. Essential for proliferation of the inner cell mass and trophectodermal cells in peri-implantation development. In Homo sapiens (Human), this protein is Upstream-binding factor 1-like protein 1.